The chain runs to 215 residues: Sodium channel regulatory subunit beta-3 (215 aa).

The N-terminal stretch at 1 to 22 (MPAFNRLFPLASLLLILWVGVC) is a signal peptide. Residues 23–156 (FPVCVEVPSE…EEAGEDFTSV (134 aa)) are Extracellular-facing. Cystine bridges form between Cys26-Cys48 and Cys45-Cys120. The region spanning 32 to 154 (ETEAVQGNPM…VTEEAGEDFT (123 aa)) is the Ig-like C2-type domain. N-linked (GlcNAc...) asparagine glycans are attached at residues Asn95, Asn109, Asn113, and Asn121. Residues 157 to 178 (VSEIMMYILLVFLTLWLLIEMI) form a helical membrane-spanning segment. The Cytoplasmic segment spans residues 179-215 (YCYRKVSKAEEAAQENASDYLAIPSENKENSAVPVEE).

This sequence belongs to the sodium channel auxiliary subunit SCN3B (TC 8.A.17) family. As to quaternary structure, a voltage-gated sodium (Nav) channel consists of an ion-conducting pore-forming alpha subunit functional on its own that is regulated by one or more beta subunits. Forms homodimers and homotrimers. SCN3B is non-covalently associated with alpha subunits and induces the formation of alpha subunit oligomers, including trimers. Interacts with SCN5A/Nav1.5; regulatory subunit of SCN5A/Nav1.5. Interacts with SCN7A/Nav2.1; probable regulatory subunit of SCN7A/Nav2.1. Interacts with SCN10A; regulatory subunit of SCN10A/Nav1.8. Interacts with NFASC; probably involved in targeting the sodium channels to the nodes of Ranvier. Post-translationally, intramolecular disulfide bonds favor the voltage-gated sodium channel oligomeric complex assembly. In terms of processing, N-glycosylated.

It localises to the cell membrane. In terms of biological role, regulatory subunit of multiple voltage-gated sodium (Nav) channels directly mediating the depolarization of excitable membranes. Navs, also called VGSCs (voltage-gated sodium channels) or VDSCs (voltage-dependent sodium channels), operate by switching between closed and open conformations depending on the voltage difference across the membrane. In the open conformation they allow Na(+) ions to selectively pass through the pore, along their electrochemical gradient. The influx of Na+ ions provokes membrane depolarization, initiating the propagation of electrical signals throughout cells and tissues. The accessory beta subunits participate in localization and functional modulation of the Nav channels. Modulates the activity of SCN2A/Nav1.2, causing a hyperpolarizing shift in the voltage-dependence of inactivation of the channel and increasing the fraction of channels operating in the fast gating mode. Modulates the activity of SCN5A/Nav1.5. Could also regulate the atypical sodium channel SCN7A/Nav2.1. Modulates the activity of SCN10A/Nav1.8, regulating its oligomerization and accelerating the recovery from inactivation. The chain is Sodium channel regulatory subunit beta-3 from Bos taurus (Bovine).